We begin with the raw amino-acid sequence, 567 residues long: Methionine--tRNA ligase (567 aa).

The short motif at 11-21 is the 'HIGH' region element; it reads PYVQTVPHLGN. 4 residues coordinate Zn(2+): C143, C146, C156, and C159. The 'KMSKS' region signature appears at 331-335; that stretch reads KFSKS. ATP is bound at residue K334.

The protein belongs to the class-I aminoacyl-tRNA synthetase family. MetG type 1 subfamily. Zn(2+) serves as cofactor.

The protein localises to the cytoplasm. The enzyme catalyses tRNA(Met) + L-methionine + ATP = L-methionyl-tRNA(Met) + AMP + diphosphate. Is required not only for elongation of protein synthesis but also for the initiation of all mRNA translation through initiator tRNA(fMet) aminoacylation. The polypeptide is Methionine--tRNA ligase (Pyrobaculum islandicum (strain DSM 4184 / JCM 9189 / GEO3)).